Reading from the N-terminus, the 276-residue chain is Diaminopimelate epimerase (276 aa).

Substrate is bound by residues N13, Q46, and N66. The active-site Proton donor is C75. Substrate-binding positions include 76-77, N159, N192, and 210-211; these read GN and ER. C219 serves as the catalytic Proton acceptor. Substrate is bound at residue 220–221; that stretch reads GT.

The protein belongs to the diaminopimelate epimerase family. In terms of assembly, homodimer.

The protein localises to the cytoplasm. It carries out the reaction (2S,6S)-2,6-diaminopimelate = meso-2,6-diaminopimelate. Its pathway is amino-acid biosynthesis; L-lysine biosynthesis via DAP pathway; DL-2,6-diaminopimelate from LL-2,6-diaminopimelate: step 1/1. Functionally, catalyzes the stereoinversion of LL-2,6-diaminopimelate (L,L-DAP) to meso-diaminopimelate (meso-DAP), a precursor of L-lysine and an essential component of the bacterial peptidoglycan. The protein is Diaminopimelate epimerase of Chromobacterium violaceum (strain ATCC 12472 / DSM 30191 / JCM 1249 / CCUG 213 / NBRC 12614 / NCIMB 9131 / NCTC 9757 / MK).